Consider the following 382-residue polypeptide: tRNA (guanine(37)-N(1))-methyltransferase (382 aa).

S-adenosyl-L-methionine is bound by residues His205, 243-244 (DL), 269-270 (DA), and Asn291.

It belongs to the class I-like SAM-binding methyltransferase superfamily. TRM5/TYW2 family. As to quaternary structure, monomer.

The protein resides in the mitochondrion matrix. The protein localises to the nucleus. It localises to the cytoplasm. It catalyses the reaction guanosine(37) in tRNA + S-adenosyl-L-methionine = N(1)-methylguanosine(37) in tRNA + S-adenosyl-L-homocysteine + H(+). Specifically methylates the N1 position of guanosine-37 in various cytoplasmic and mitochondrial tRNAs. Methylation is not dependent on the nature of the nucleoside 5' of the target nucleoside. This is the first step in the biosynthesis of wybutosine (yW), a modified base adjacent to the anticodon of tRNAs and required for accurate decoding. This chain is tRNA (guanine(37)-N(1))-methyltransferase, found in Entamoeba histolytica (strain ATCC 30459 / HM-1:IMSS / ABRM).